The following is a 202-amino-acid chain: Peptidyl-tRNA hydrolase (202 aa).

Tyr14 contacts tRNA. Catalysis depends on His19, which acts as the Proton acceptor. The tRNA site is built by Tyr64, Asn66, and Asn112.

The protein belongs to the PTH family. Monomer.

It is found in the cytoplasm. It catalyses the reaction an N-acyl-L-alpha-aminoacyl-tRNA + H2O = an N-acyl-L-amino acid + a tRNA + H(+). Functionally, hydrolyzes ribosome-free peptidyl-tRNAs (with 1 or more amino acids incorporated), which drop off the ribosome during protein synthesis, or as a result of ribosome stalling. Its function is as follows. Catalyzes the release of premature peptidyl moieties from peptidyl-tRNA molecules trapped in stalled 50S ribosomal subunits, and thus maintains levels of free tRNAs and 50S ribosomes. The sequence is that of Peptidyl-tRNA hydrolase from Nitrobacter winogradskyi (strain ATCC 25391 / DSM 10237 / CIP 104748 / NCIMB 11846 / Nb-255).